The sequence spans 143 residues: Hemoglobin subunit alpha-2 (143 aa).

Ser-2 is modified (N-acetylserine). The region spanning 2–143 is the Globin domain; that stretch reads SLSAKDKATV…LALALSEKYR (142 aa). An O2-binding site is contributed by His-60. His-89 contacts heme b.

The protein belongs to the globin family. Hb 2 is a heterotetramer of two alpha-2 and two beta-1 chains. Hb 3 is a heterotetramer of two alpha-2 and two beta-2 chains. Red blood cells.

Functionally, involved in oxygen transport from gills to the various peripheral tissues. This is Hemoglobin subunit alpha-2 (hba2) from Boreogadus saida (Polar cod).